The sequence spans 674 residues: Cysteine-rich receptor-like protein kinase 6 (674 aa).

The signal sequence occupies residues 1–24; it reads MSSLISFNFLFLFSFLTSSFTASA. At 25–289 the chain is on the extracellular side; it reads QDPFYLNHYC…LPGKSGNSTV (265 aa). Gnk2-homologous domains follow at residues 28-132 and 139-245; these read FYLN…HKNI and NEGE…LYPF. N-linked (GlcNAc...) asparagine glycans are attached at residues asparagine 36, asparagine 43, asparagine 61, asparagine 70, asparagine 104, asparagine 178, and asparagine 247. A compositionally biased stretch (pro residues) spans 254–266; it reads PPLPPPPPPPPPR. The disordered stretch occupies residues 254-284; it reads PPLPPPPPPPPPRESLVSTPPISSSSLPGKS. Residues 268 to 284 show a composition bias toward low complexity; the sequence is SLVSTPPISSSSLPGKS. An N-linked (GlcNAc...) asparagine glycan is attached at asparagine 286. The chain crosses the membrane as a helical span at residues 290–310; sequence LVVAVVVLAVLLFIALVGYCF. Residues 311–674 lie on the Cytoplasmic side of the membrane; it reads LAKKKKKTFD…DESITDLYPR (364 aa). Residues 351–637 form the Protein kinase domain; it reads FAESNKIGRG…TLPVPRQPGF (287 aa). Residues 357–365 and lysine 379 each bind ATP; that span reads IGRGGFGEV. Residue tyrosine 424 is modified to Phosphotyrosine. Aspartate 476 functions as the Proton acceptor in the catalytic mechanism. Serine 480 carries the post-translational modification Phosphoserine. Residue threonine 516 is modified to Phosphothreonine. Tyrosine 524 bears the Phosphotyrosine mark. The tract at residues 648-674 is disordered; the sequence is LDSDQSTTTKSFPASIDDESITDLYPR. Residues 650–659 show a composition bias toward polar residues; it reads SDQSTTTKSF.

The protein belongs to the protein kinase superfamily. Ser/Thr protein kinase family. CRK subfamily.

Its subcellular location is the membrane. It catalyses the reaction L-seryl-[protein] + ATP = O-phospho-L-seryl-[protein] + ADP + H(+). The catalysed reaction is L-threonyl-[protein] + ATP = O-phospho-L-threonyl-[protein] + ADP + H(+). The chain is Cysteine-rich receptor-like protein kinase 6 (CRK6) from Arabidopsis thaliana (Mouse-ear cress).